Reading from the N-terminus, the 30-residue chain is Bowman-Birk type proteinase inhibitor 4 (30 aa).

Disulfide bonds link Cys-9–Cys-24 and Cys-14–Cys-22.

Its function is as follows. Inhibits trypsin (IC(50)=17.60 nM) and, to a lesser extent, alpha-chymotrypsin (IC(50)=2.38 uM). This is Bowman-Birk type proteinase inhibitor 4 from Lathyrus sativus (White vetchling).